A 443-amino-acid chain; its full sequence is Glutamyl-tRNA reductase (443 aa).

Residues 49-52 (TCNR), Ser-109, 114-116 (ETQ), and Gln-120 contribute to the substrate site. Cys-50 (nucleophile) is an active-site residue. 189–194 (GAGKMG) is a binding site for NADP(+).

This sequence belongs to the glutamyl-tRNA reductase family. Homodimer.

The enzyme catalyses (S)-4-amino-5-oxopentanoate + tRNA(Glu) + NADP(+) = L-glutamyl-tRNA(Glu) + NADPH + H(+). Its pathway is porphyrin-containing compound metabolism; protoporphyrin-IX biosynthesis; 5-aminolevulinate from L-glutamyl-tRNA(Glu): step 1/2. Functionally, catalyzes the NADPH-dependent reduction of glutamyl-tRNA(Glu) to glutamate 1-semialdehyde (GSA). The protein is Glutamyl-tRNA reductase of Bacillus mycoides (strain KBAB4) (Bacillus weihenstephanensis).